The sequence spans 258 residues: Thiazole synthase (258 aa).

The active-site Schiff-base intermediate with DXP is the lysine 98. Residues glycine 159, 185–186 (AG), and 207–208 (NT) each bind 1-deoxy-D-xylulose 5-phosphate.

This sequence belongs to the ThiG family. Homotetramer. Forms heterodimers with either ThiH or ThiS.

Its subcellular location is the cytoplasm. The catalysed reaction is [ThiS sulfur-carrier protein]-C-terminal-Gly-aminoethanethioate + 2-iminoacetate + 1-deoxy-D-xylulose 5-phosphate = [ThiS sulfur-carrier protein]-C-terminal Gly-Gly + 2-[(2R,5Z)-2-carboxy-4-methylthiazol-5(2H)-ylidene]ethyl phosphate + 2 H2O + H(+). Its pathway is cofactor biosynthesis; thiamine diphosphate biosynthesis. Catalyzes the rearrangement of 1-deoxy-D-xylulose 5-phosphate (DXP) to produce the thiazole phosphate moiety of thiamine. Sulfur is provided by the thiocarboxylate moiety of the carrier protein ThiS. In vitro, sulfur can be provided by H(2)S. The protein is Thiazole synthase of Bacillus cereus (strain ATCC 14579 / DSM 31 / CCUG 7414 / JCM 2152 / NBRC 15305 / NCIMB 9373 / NCTC 2599 / NRRL B-3711).